The chain runs to 261 residues: Sepiapterin reductase (261 aa).

N-acetylmethionine is present on Met-1. An NADP(+)-binding site is contributed by 15 to 21 (GASRGFG). Phosphoserine is present on Ser-33. 43-44 (RS) is a binding site for NADP(+). Ser-46 is subject to Phosphoserine. Residue 70–71 (DL) participates in NADP(+) binding. Residues 158–159 (SL) and Tyr-171 contribute to the substrate site. Lys-175 lines the NADP(+) pocket. The residue at position 196 (Ser-196) is a Phosphoserine. Gly-200 contacts substrate. 202 to 207 (LDNDMQ) serves as a coordination point for NADP(+). Ser-214 bears the Phosphoserine mark. The substrate site is built by Lys-222 and Asp-258.

This sequence belongs to the sepiapterin reductase family. As to quaternary structure, homodimer.

It localises to the cytoplasm. The enzyme catalyses L-erythro-7,8-dihydrobiopterin + NADP(+) = L-sepiapterin + NADPH + H(+). It catalyses the reaction (6R)-L-erythro-5,6,7,8-tetrahydrobiopterin + 2 NADP(+) = 6-pyruvoyl-5,6,7,8-tetrahydropterin + 2 NADPH + 2 H(+). Catalyzes the final one or two reductions in tetra-hydrobiopterin biosynthesis to form 5,6,7,8-tetrahydrobiopterin. The polypeptide is Sepiapterin reductase (Spr) (Mus musculus (Mouse)).